We begin with the raw amino-acid sequence, 425 residues long: Polyadenylate-binding protein RBP47B' (425 aa).

3 consecutive RRM domains span residues 24-102, 116-195, and 237-309; these read RTLW…LNWA, HSIF…AATP, and TTIS…WSKN.

It belongs to the polyadenylate-binding RBP47 family. Interacts with the poly(A) tail of mRNA in nucleus.

It is found in the nucleus. The protein resides in the cytoplasmic granule. Functionally, heterogeneous nuclear ribonucleoprotein (hnRNP)-protein binding the poly(A) tail of mRNA and probably involved in some steps of pre-mRNA maturation. The polypeptide is Polyadenylate-binding protein RBP47B' (RBP47B') (Arabidopsis thaliana (Mouse-ear cress)).